Consider the following 497-residue polypeptide: Probable cytosol aminopeptidase (497 aa).

Residues Lys-267 and Asp-272 each contribute to the Mn(2+) site. Residue Lys-279 is part of the active site. Asp-290, Asp-349, and Glu-351 together coordinate Mn(2+). Arg-353 is a catalytic residue.

Belongs to the peptidase M17 family. Mn(2+) serves as cofactor.

The protein localises to the cytoplasm. The enzyme catalyses Release of an N-terminal amino acid, Xaa-|-Yaa-, in which Xaa is preferably Leu, but may be other amino acids including Pro although not Arg or Lys, and Yaa may be Pro. Amino acid amides and methyl esters are also readily hydrolyzed, but rates on arylamides are exceedingly low.. The catalysed reaction is Release of an N-terminal amino acid, preferentially leucine, but not glutamic or aspartic acids.. Its function is as follows. Presumably involved in the processing and regular turnover of intracellular proteins. Catalyzes the removal of unsubstituted N-terminal amino acids from various peptides. In Syntrophotalea carbinolica (strain DSM 2380 / NBRC 103641 / GraBd1) (Pelobacter carbinolicus), this protein is Probable cytosol aminopeptidase.